Reading from the N-terminus, the 220-residue chain is ATP synthase subunit beta, chloroplastic (220 aa).

This sequence belongs to the ATPase alpha/beta chains family. As to quaternary structure, F-type ATPases have 2 components, CF(1) - the catalytic core - and CF(0) - the membrane proton channel. CF(1) has five subunits: alpha(3), beta(3), gamma(1), delta(1), epsilon(1). CF(0) has four main subunits: a(1), b(1), b'(1) and c(9-12).

It localises to the plastid. Its subcellular location is the chloroplast thylakoid membrane. The enzyme catalyses ATP + H2O + 4 H(+)(in) = ADP + phosphate + 5 H(+)(out). Its function is as follows. Produces ATP from ADP in the presence of a proton gradient across the membrane. The catalytic sites are hosted primarily by the beta subunits. This Osmundastrum cinnamomeum (Cinnamon fern) protein is ATP synthase subunit beta, chloroplastic (atpB).